The following is a 122-amino-acid chain: Large ribosomal subunit protein uL14 (122 aa).

The protein belongs to the universal ribosomal protein uL14 family. As to quaternary structure, part of the 50S ribosomal subunit. Forms a cluster with proteins L3 and L19. In the 70S ribosome, L14 and L19 interact and together make contacts with the 16S rRNA in bridges B5 and B8.

Binds to 23S rRNA. Forms part of two intersubunit bridges in the 70S ribosome. This Aliarcobacter butzleri (strain RM4018) (Arcobacter butzleri) protein is Large ribosomal subunit protein uL14.